We begin with the raw amino-acid sequence, 245 residues long: Ribonuclease PH (245 aa).

Phosphate is bound by residues arginine 86 and glycine 124–arginine 126.

It belongs to the RNase PH family. As to quaternary structure, homohexameric ring arranged as a trimer of dimers.

The enzyme catalyses tRNA(n+1) + phosphate = tRNA(n) + a ribonucleoside 5'-diphosphate. In terms of biological role, phosphorolytic 3'-5' exoribonuclease that plays an important role in tRNA 3'-end maturation. Removes nucleotide residues following the 3'-CCA terminus of tRNAs; can also add nucleotides to the ends of RNA molecules by using nucleoside diphosphates as substrates, but this may not be physiologically important. Probably plays a role in initiation of 16S rRNA degradation (leading to ribosome degradation) during starvation. This chain is Ribonuclease PH, found in Bacillus cereus (strain B4264).